Here is a 172-residue protein sequence, read N- to C-terminus: Auxin-responsive protein IAA30 (172 aa).

The segment covering 1-18 (MGRGRSSSSSSIESSCKS) has biased composition (low complexity). The tract at residues 1–28 (MGRGRSSSSSSIESSCKSNPFGVSSSNT) is disordered. An EAR-like (transcriptional repression) motif is present at residues 35–39 (LRLGL). One can recognise a PB1 domain in the interval 82–171 (SFYVKVNMEG…RRLKISRAYH (90 aa)).

It belongs to the Aux/IAA family. In terms of assembly, homodimers and heterodimers.

The protein resides in the nucleus. Aux/IAA proteins are short-lived transcriptional factors that function as repressors of early auxin response genes at low auxin concentrations. Repression is thought to result from the interaction with auxin response factors (ARFs), proteins that bind to the auxin-responsive promoter element (AuxRE). Formation of heterodimers with ARF proteins may alter their ability to modulate early auxin response genes expression. In Arabidopsis thaliana (Mouse-ear cress), this protein is Auxin-responsive protein IAA30 (IAA30).